A 227-amino-acid polypeptide reads, in one-letter code: Cytochrome c oxidase subunit 2 (227 aa).

At 1–14 (MALPFQLGFQDATS) the chain is on the mitochondrial intermembrane side. Residues 15–45 (PIMEELLHFHDHTLMIVFMISSLVLYLISSM) form a helical membrane-spanning segment. Topologically, residues 46 to 59 (LTTRLTHTSTMDAQ) are mitochondrial matrix. The chain crosses the membrane as a helical span at residues 60-87 (EVETIWTILPAIILITIALPSLRILYMM). Residues 88-227 (DEINNPSMTI…CFEKWSTSML (140 aa)) are Mitochondrial intermembrane-facing. 6 residues coordinate Cu cation: H161, C196, E198, C200, H204, and M207. Residue E198 coordinates Mg(2+).

Belongs to the cytochrome c oxidase subunit 2 family. In terms of assembly, component of the cytochrome c oxidase (complex IV, CIV), a multisubunit enzyme composed of 14 subunits. The complex is composed of a catalytic core of 3 subunits MT-CO1, MT-CO2 and MT-CO3, encoded in the mitochondrial DNA, and 11 supernumerary subunits COX4I, COX5A, COX5B, COX6A, COX6B, COX6C, COX7A, COX7B, COX7C, COX8 and NDUFA4, which are encoded in the nuclear genome. The complex exists as a monomer or a dimer and forms supercomplexes (SCs) in the inner mitochondrial membrane with NADH-ubiquinone oxidoreductase (complex I, CI) and ubiquinol-cytochrome c oxidoreductase (cytochrome b-c1 complex, complex III, CIII), resulting in different assemblies (supercomplex SCI(1)III(2)IV(1) and megacomplex MCI(2)III(2)IV(2)). Found in a complex with TMEM177, COA6, COX18, COX20, SCO1 and SCO2. Interacts with TMEM177 in a COX20-dependent manner. Interacts with COX20. Interacts with COX16. The cofactor is Cu cation.

Its subcellular location is the mitochondrion inner membrane. It carries out the reaction 4 Fe(II)-[cytochrome c] + O2 + 8 H(+)(in) = 4 Fe(III)-[cytochrome c] + 2 H2O + 4 H(+)(out). Its function is as follows. Component of the cytochrome c oxidase, the last enzyme in the mitochondrial electron transport chain which drives oxidative phosphorylation. The respiratory chain contains 3 multisubunit complexes succinate dehydrogenase (complex II, CII), ubiquinol-cytochrome c oxidoreductase (cytochrome b-c1 complex, complex III, CIII) and cytochrome c oxidase (complex IV, CIV), that cooperate to transfer electrons derived from NADH and succinate to molecular oxygen, creating an electrochemical gradient over the inner membrane that drives transmembrane transport and the ATP synthase. Cytochrome c oxidase is the component of the respiratory chain that catalyzes the reduction of oxygen to water. Electrons originating from reduced cytochrome c in the intermembrane space (IMS) are transferred via the dinuclear copper A center (CU(A)) of subunit 2 and heme A of subunit 1 to the active site in subunit 1, a binuclear center (BNC) formed by heme A3 and copper B (CU(B)). The BNC reduces molecular oxygen to 2 water molecules using 4 electrons from cytochrome c in the IMS and 4 protons from the mitochondrial matrix. This chain is Cytochrome c oxidase subunit 2 (MT-CO2), found in Phyllostomus hastatus (Greater spear-nosed bat).